The following is a 301-amino-acid chain: MLTMSELSEVEISEILKDAEDFANGKESKTTEQTFVANLFFENSTRTRFSFEVAEKRLGLDVLNFSADASSVQKGETLYDTIRTLESIGTKAVVIRHEQDRYFDELKDQVNIPILNAGDGCGNHPTQCLLDLLTIKQEFGRFEGLKIAIVGDVRHSRVARSNAEALTKLGATIYFASPEEWKDEDNTFGTYKPLDELVPEVDVMMLLRVQHERHDHYETDIMKEYHEKHGLTVEREKRMKEGSIIMHPAPVNRDVEIASELVECERSRIFKQMENGVYVRMAVLKRALPNVLGGMKHELFV.

Carbamoyl phosphate-binding residues include Arg-46 and Thr-47. Lys-74 lines the L-aspartate pocket. 3 residues coordinate carbamoyl phosphate: Arg-96, His-124, and Gln-127. L-aspartate contacts are provided by Arg-157 and Arg-208. Residues Ala-249 and Pro-250 each contribute to the carbamoyl phosphate site.

This sequence belongs to the aspartate/ornithine carbamoyltransferase superfamily. ATCase family. In terms of assembly, heterododecamer (2C3:3R2) of six catalytic PyrB chains organized as two trimers (C3), and six regulatory PyrI chains organized as three dimers (R2).

It carries out the reaction carbamoyl phosphate + L-aspartate = N-carbamoyl-L-aspartate + phosphate + H(+). The protein operates within pyrimidine metabolism; UMP biosynthesis via de novo pathway; (S)-dihydroorotate from bicarbonate: step 2/3. Its function is as follows. Catalyzes the condensation of carbamoyl phosphate and aspartate to form carbamoyl aspartate and inorganic phosphate, the committed step in the de novo pyrimidine nucleotide biosynthesis pathway. This is Aspartate carbamoyltransferase catalytic subunit from Bacillus cereus (strain ATCC 14579 / DSM 31 / CCUG 7414 / JCM 2152 / NBRC 15305 / NCIMB 9373 / NCTC 2599 / NRRL B-3711).